We begin with the raw amino-acid sequence, 732 residues long: Translation initiation factor eIF2B subunit epsilon (732 aa).

Positions 559-726 (GEEEEDFGVE…QEADEEDSDE (168 aa)) constitute a W2 domain.

The protein belongs to the eIF-2B gamma/epsilon subunits family. In terms of assembly, component of the translation initiation factor 2B (eIF2B) complex which is a heterodecamer of two sets of five different subunits: alpha, beta, gamma, delta and epsilon. Subunits alpha, beta and delta comprise a regulatory subcomplex and subunits epsilon and gamma comprise a catalytic subcomplex. Within the complex, the hexameric regulatory complex resides at the center, with the two heterodimeric catalytic subcomplexes bound on opposite sides.

It is found in the cytoplasm. The protein resides in the cytosol. In terms of biological role, acts as a component of the translation initiation factor 2B (eIF2B) complex, which catalyzes the exchange of GDP for GTP on the eukaryotic initiation factor 2 (eIF2) complex gamma subunit. Its guanine nucleotide exchange factor activity is repressed when bound to eIF2 complex phosphorylated on the alpha subunit, thereby limiting the amount of methionyl-initiator methionine tRNA available to the ribosome and consequently global translation is repressed. The protein is Translation initiation factor eIF2B subunit epsilon (GCD6) of Candida albicans (strain SC5314 / ATCC MYA-2876) (Yeast).